We begin with the raw amino-acid sequence, 388 residues long: Outer membrane protein assembly factor BamB (388 aa).

The N-terminal stretch at 1-17 (MVLSLLSVMLLSGYKFL) is a signal peptide.

The protein belongs to the BamB family. Part of the Bam complex, which is composed of the outer membrane protein BamA, and four lipoproteins BamB, BamC, BamD and BamE.

The protein localises to the cell outer membrane. In terms of biological role, part of the outer membrane protein assembly complex, which is involved in assembly and insertion of beta-barrel proteins into the outer membrane. The sequence is that of Outer membrane protein assembly factor BamB from Moranella endobia (strain PCIT).